The following is a 191-amino-acid chain: Small ribosomal subunit protein uS7 (191 aa).

The segment at Asn-56–Leu-80 is disordered.

Belongs to the universal ribosomal protein uS7 family. Part of the 30S ribosomal subunit. Contacts proteins S9 and S11.

One of the primary rRNA binding proteins, it binds directly to 16S rRNA where it nucleates assembly of the head domain of the 30S subunit. Is located at the subunit interface close to the decoding center, probably blocks exit of the E-site tRNA. This is Small ribosomal subunit protein uS7 from Coxiella burnetii (strain RSA 493 / Nine Mile phase I).